Here is a 392-residue protein sequence, read N- to C-terminus: Phosphoglycerate kinase (392 aa).

Substrate-binding positions include 19-21 (DYN), Arg-34, 57-60 (HLGR), Arg-116, and Arg-149. Residues Lys-199, Glu-321, and 347-350 (GGDS) contribute to the ATP site.

This sequence belongs to the phosphoglycerate kinase family. As to quaternary structure, monomer.

The protein resides in the cytoplasm. It catalyses the reaction (2R)-3-phosphoglycerate + ATP = (2R)-3-phospho-glyceroyl phosphate + ADP. Its pathway is carbohydrate degradation; glycolysis; pyruvate from D-glyceraldehyde 3-phosphate: step 2/5. The sequence is that of Phosphoglycerate kinase from Thermomicrobium roseum (strain ATCC 27502 / DSM 5159 / P-2).